Reading from the N-terminus, the 183-residue chain is Small ribosomal subunit protein uS4c (183 aa).

An S4 RNA-binding domain is found at M82–N143.

It belongs to the universal ribosomal protein uS4 family. As to quaternary structure, part of the 30S ribosomal subunit. Contacts protein S5. The interaction surface between S4 and S5 is involved in control of translational fidelity.

Its subcellular location is the plastid. The protein resides in the chloroplast. Functionally, one of the primary rRNA binding proteins, it binds directly to 16S rRNA where it nucleates assembly of the body of the 30S subunit. Its function is as follows. With S5 and S12 plays an important role in translational accuracy. The sequence is that of Small ribosomal subunit protein uS4c (rps4) from Schizorhiza neglecta (Lapeirousia neglecta).